Here is a 285-residue protein sequence, read N- to C-terminus: Energy-coupling factor transporter ATP-binding protein EcfA2 (285 aa).

The ABC transporter domain maps to 3-245 (IKIENLNHIY…VETLEKIGLA (243 aa)). Residue 40–47 (GHTGSGKS) participates in ATP binding.

This sequence belongs to the ABC transporter superfamily. Energy-coupling factor EcfA family. Forms a stable energy-coupling factor (ECF) transporter complex composed of 2 membrane-embedded substrate-binding proteins (S component), 2 ATP-binding proteins (A component) and 2 transmembrane proteins (T component).

The protein localises to the cell membrane. In terms of biological role, ATP-binding (A) component of a common energy-coupling factor (ECF) ABC-transporter complex. Unlike classic ABC transporters this ECF transporter provides the energy necessary to transport a number of different substrates. This chain is Energy-coupling factor transporter ATP-binding protein EcfA2, found in Clostridium perfringens (strain 13 / Type A).